Reading from the N-terminus, the 159-residue chain is Transcriptional repressor NrdR (159 aa).

Residues 1 to 21 (MRCPKCQHNKSNVIDSRQAED) are disordered. A zinc finger lies at 3–34 (CPKCQHNKSNVIDSRQAEDGNTIRRRRECDAC). Residues 49–139 (LLVVKKDGTR…VYRSFKDVDE (91 aa)) form the ATP-cone domain.

Belongs to the NrdR family. The cofactor is Zn(2+).

Negatively regulates transcription of bacterial ribonucleotide reductase nrd genes and operons by binding to NrdR-boxes. The sequence is that of Transcriptional repressor NrdR from Streptococcus thermophilus (strain ATCC BAA-491 / LMD-9).